The following is a 154-amino-acid chain: MVKAVAVVRGDSKVSGSVVFEQETENGPTTITWDITGHDANAKRGMHIHTFGDNTNGCTSAGPHFNPHGKTHGNRTDENRHVGDLGNIETDAQGNSKGTVTDNLIKLIGPESVIGRTVVVHAGTDDLGKGDTEESLKTGNAGARPACGVIGISA.

3 residues coordinate Cu cation: histidine 47, histidine 49, and histidine 64. A disulfide bridge connects residues cysteine 58 and cysteine 147. Residues histidine 64, histidine 72, histidine 81, and aspartate 84 each contribute to the Zn(2+) site. Residue histidine 121 participates in Cu cation binding. Arginine 144 contributes to the substrate binding site.

It belongs to the Cu-Zn superoxide dismutase family. In terms of assembly, homodimer. The cofactor is Cu cation. Zn(2+) is required as a cofactor.

It is found in the cytoplasm. The enzyme catalyses 2 superoxide + 2 H(+) = H2O2 + O2. Its function is as follows. Destroys radicals which are normally produced within the cells and which are toxic to biological systems. This Podospora anserina (Pleurage anserina) protein is Superoxide dismutase [Cu-Zn] (SOD1).